A 353-amino-acid chain; its full sequence is 3-isopropylmalate dehydrogenase (353 aa).

75 to 88 (GPKWENLPHEHKPE) contributes to the NAD(+) binding site. Substrate is bound by residues Arg95, Arg105, Arg133, and Asp219. Mg(2+)-binding residues include Asp219, Asp243, and Asp247. Residue 276 to 288 (GSAPDIAGKNIAN) coordinates NAD(+).

Belongs to the isocitrate and isopropylmalate dehydrogenases family. LeuB type 1 subfamily. Homodimer. The cofactor is Mg(2+). Requires Mn(2+) as cofactor.

The protein localises to the cytoplasm. The catalysed reaction is (2R,3S)-3-isopropylmalate + NAD(+) = 4-methyl-2-oxopentanoate + CO2 + NADH. It functions in the pathway amino-acid biosynthesis; L-leucine biosynthesis; L-leucine from 3-methyl-2-oxobutanoate: step 3/4. Catalyzes the oxidation of 3-carboxy-2-hydroxy-4-methylpentanoate (3-isopropylmalate) to 3-carboxy-4-methyl-2-oxopentanoate. The product decarboxylates to 4-methyl-2 oxopentanoate. The protein is 3-isopropylmalate dehydrogenase of Chlorobium luteolum (strain DSM 273 / BCRC 81028 / 2530) (Pelodictyon luteolum).